A 309-amino-acid chain; its full sequence is Pyridoxal 5'-phosphate synthase subunit PDX1.1 (309 aa).

Methionine 1 is subject to N-acetylmethionine. Aspartate 41 provides a ligand contact to D-ribose 5-phosphate. The active-site Schiff-base intermediate with D-ribose 5-phosphate is lysine 98. Residue glycine 170 participates in D-ribose 5-phosphate binding. Arginine 182 is a binding site for D-glyceraldehyde 3-phosphate. D-ribose 5-phosphate is bound by residues glycine 231 and 252-253 (GS).

This sequence belongs to the PdxS/SNZ family. In terms of assembly, homodimer or heterodimer with PDX1.2 or PDX1.3. Interacts with PDX2. In terms of tissue distribution, expressed in flowers, shoots, leaves and weakly in roots.

It is found in the cytoplasm. It carries out the reaction aldehydo-D-ribose 5-phosphate + D-glyceraldehyde 3-phosphate + L-glutamine = pyridoxal 5'-phosphate + L-glutamate + phosphate + 3 H2O + H(+). It functions in the pathway cofactor biosynthesis; pyridoxal 5'-phosphate biosynthesis. Functionally, catalyzes the formation of pyridoxal 5'-phosphate from ribose 5-phosphate (RBP), glyceraldehyde 3-phosphate (G3P) and ammonia. The ammonia is provided by PDX2. Can also use ribulose 5-phosphate and dihydroxyacetone phosphate as substrates, resulting from enzyme-catalyzed isomerization of RBP and G3P, respectively. Also plays an indirect role in resistance to singlet oxygen-generating photosensitizers. The protein is Pyridoxal 5'-phosphate synthase subunit PDX1.1 (PDX11) of Arabidopsis thaliana (Mouse-ear cress).